The following is a 275-amino-acid chain: Catechol 1,2-dioxygenase 2 (275 aa).

Positions 158, 192, 216, and 218 each coordinate Fe cation.

Belongs to the intradiol ring-cleavage dioxygenase family. As to quaternary structure, homodimer. Fe(3+) serves as cofactor.

It carries out the reaction catechol + O2 = cis,cis-muconate + 2 H(+). Its pathway is aromatic compound metabolism; beta-ketoadipate pathway; 5-oxo-4,5-dihydro-2-furylacetate from catechol: step 1/3. Can cleave 4-methyl-, 4-chloro-, and 3-methoxycatechol at lower rates than catechol, but has no activity with 4-nitrocatechol or protocatechuic acid. This Acinetobacter lwoffii protein is Catechol 1,2-dioxygenase 2 (catA2).